A 151-amino-acid polypeptide reads, in one-letter code: Ubiquitin-like protein 4A-B (151 aa).

Residues 1-76 (MILTIKPLQG…LNLVVRPAGE (76 aa)) enclose the Ubiquitin-like domain.

In terms of assembly, component of the BAT3 complex.

It localises to the cytoplasm. The protein localises to the cytosol. Its function is as follows. Component of the BAT3 complex, a multiprotein complex involved in the post-translational delivery of tail-anchored (TA) membrane proteins to the endoplasmic reticulum membrane. TA membrane proteins, also named type II transmembrane proteins, contain a single C-terminal transmembrane region. This is Ubiquitin-like protein 4A-B (ubl4ab) from Salmo salar (Atlantic salmon).